The chain runs to 135 residues: UPF0299 membrane protein ECA2828 (135 aa).

The next 4 helical transmembrane spans lie at 5–25, 30–50, 63–83, and 93–113; these read FIVCWQYLRAFALIYLCLLAG, ALLPFTIPGSIIGMLVLFTLL, GCYLLIRHMALLFVPIGVGVM, and FGPIVVSCLISTFIVMLVVGF.

It belongs to the UPF0299 family.

The protein resides in the cell inner membrane. The chain is UPF0299 membrane protein ECA2828 from Pectobacterium atrosepticum (strain SCRI 1043 / ATCC BAA-672) (Erwinia carotovora subsp. atroseptica).